We begin with the raw amino-acid sequence, 325 residues long: dITP/XTP pyrophosphatase (325 aa).

The unknown stretch occupies residues Met-1–Ile-128. An NTP pyrophosphatase region spans residues Leu-129–Ala-324. Thr-132–Lys-137 lines the substrate pocket. Residues Glu-165 and Asp-194 each contribute to the Mg(2+) site. The Proton acceptor role is filled by Asp-194. Residues Ser-195, Phe-278–Asp-281, Lys-301, and His-306–Arg-307 contribute to the substrate site.

The protein belongs to the HAM1 NTPase family. Homodimer. Mg(2+) serves as cofactor.

It catalyses the reaction XTP + H2O = XMP + diphosphate + H(+). The enzyme catalyses dITP + H2O = dIMP + diphosphate + H(+). The catalysed reaction is ITP + H2O = IMP + diphosphate + H(+). Its function is as follows. Pyrophosphatase that catalyzes the hydrolysis of nucleoside triphosphates to their monophosphate derivatives, with a high preference for the non-canonical purine nucleotides XTP (xanthosine triphosphate), dITP (deoxyinosine triphosphate) and ITP. Seems to function as a house-cleaning enzyme that removes non-canonical purine nucleotides from the nucleotide pool, thus preventing their incorporation into DNA/RNA and avoiding chromosomal lesions. In Streptococcus mutans serotype c (strain ATCC 700610 / UA159), this protein is dITP/XTP pyrophosphatase.